Consider the following 1481-residue polypeptide: ABC multidrug transporter atrH (1481 aa).

Residues methionine 1–leucine 10 show a composition bias toward basic and acidic residues. Disordered stretches follow at residues methionine 1–glutamine 45 and isoleucine 61–phenylalanine 89. N-linked (GlcNAc...) asparagine glycosylation is found at asparagine 19, asparagine 76, and asparagine 320. In terms of domain architecture, ABC transporter 1 spans alanine 134 to glutamate 396. Residues methionine 507–tyrosine 527 traverse the membrane as a helical segment. A glycan (N-linked (GlcNAc...) asparagine) is linked at asparagine 530. 5 helical membrane-spanning segments follow: residues leucine 542–tryptophan 562, leucine 587–phenylalanine 607, glycine 616–phenylalanine 636, glutamate 650–valine 670, and phenylalanine 758–leucine 778. An ABC transporter 2 domain is found at phenylalanine 838–serine 1081. ATP is bound at residue glycine 874 to threonine 881. The next 6 helical transmembrane spans lie at tyrosine 1174–tryptophan 1194, isoleucine 1210–methionine 1230, alanine 1249–alanine 1269, leucine 1298–isoleucine 1318, isoleucine 1327–valine 1347, and alanine 1358–valine 1378. An N-linked (GlcNAc...) asparagine glycan is attached at asparagine 1395. The helical transmembrane segment at valine 1446 to leucine 1466 threads the bilayer.

The protein belongs to the ABC transporter superfamily. ABCG family. PDR (TC 3.A.1.205) subfamily.

It is found in the cell membrane. Functionally, pleiotropic ABC efflux transporter involved in the basal level of azole susceptibility. The protein is ABC multidrug transporter atrH of Aspergillus oryzae (strain ATCC 42149 / RIB 40) (Yellow koji mold).